We begin with the raw amino-acid sequence, 243 residues long: Ubiquinone/menaquinone biosynthesis C-methyltransferase UbiE (243 aa).

S-adenosyl-L-methionine contacts are provided by residues Thr-69, Asp-90, and 116-117 (DA).

Belongs to the class I-like SAM-binding methyltransferase superfamily. MenG/UbiE family.

It catalyses the reaction a 2-demethylmenaquinol + S-adenosyl-L-methionine = a menaquinol + S-adenosyl-L-homocysteine + H(+). The enzyme catalyses a 2-methoxy-6-(all-trans-polyprenyl)benzene-1,4-diol + S-adenosyl-L-methionine = a 5-methoxy-2-methyl-3-(all-trans-polyprenyl)benzene-1,4-diol + S-adenosyl-L-homocysteine + H(+). It participates in quinol/quinone metabolism; menaquinone biosynthesis; menaquinol from 1,4-dihydroxy-2-naphthoate: step 2/2. The protein operates within cofactor biosynthesis; ubiquinone biosynthesis. Functionally, methyltransferase required for the conversion of demethylmenaquinol (DMKH2) to menaquinol (MKH2) and the conversion of 2-polyprenyl-6-methoxy-1,4-benzoquinol (DDMQH2) to 2-polyprenyl-3-methyl-6-methoxy-1,4-benzoquinol (DMQH2). This is Ubiquinone/menaquinone biosynthesis C-methyltransferase UbiE from Burkholderia ambifaria (strain MC40-6).